Consider the following 190-residue polypeptide: Lysozyme g (190 aa).

Basic and acidic residues predominate over residues 1-10; sequence MPYGKIEDIK. The segment at 1–31 is disordered; that stretch reads MPYGKIEDIKTSGASDVTAAQDGLKEGGWKS. Residues Glu71 and Asp84 contribute to the active site.

The protein belongs to the glycosyl hydrolase 23 family.

It carries out the reaction Hydrolysis of (1-&gt;4)-beta-linkages between N-acetylmuramic acid and N-acetyl-D-glucosamine residues in a peptidoglycan and between N-acetyl-D-glucosamine residues in chitodextrins.. The polypeptide is Lysozyme g (Takifugu rubripes (Japanese pufferfish)).